Reading from the N-terminus, the 243-residue chain is MSGDATRTLGKGSQPPGPVPEGLIRIYSMRFCPYSHRTRLVLKAKDIRHEVVNINLRNKPEWYYTKHPFGHIPVLETSQCQLIYESVIACEYLDDAYPGRKLFPYDPYERARQKMLLELFCKVPHLTKECLVALRCGRECTNLKAALRQEFSNLEEILEYQNTTFFGGTCISMIDYLLWPWFERLDVYGILDCVSHTPALRLWISAMKWDPTVCALLMDKSIFQGFLNLYFQNNPNAFDFGLC.

Residues 22-101 enclose the GST N-terminal domain; it reads GLIRIYSMRF…YLDDAYPGRK (80 aa). C32 serves as the catalytic Nucleophile. Residues K59, I72, and 85–86 contribute to the glutathione site; that span reads ES. A GST C-terminal domain is found at 106–231; sequence DPYERARQKM…IFQGFLNLYF (126 aa).

Belongs to the GST superfamily. Omega family. As to expression, expressed in a range of tissues, including the liver, kidney, skeletal muscle and prostate. Strongest expression in the testis.

The catalysed reaction is RX + glutathione = an S-substituted glutathione + a halide anion + H(+). It catalyses the reaction L-dehydroascorbate + 2 glutathione = glutathione disulfide + L-ascorbate. It carries out the reaction methylarsonate + 2 glutathione + H(+) = methylarsonous acid + glutathione disulfide + H2O. In terms of biological role, exhibits glutathione-dependent thiol transferase activity. Has high dehydroascorbate reductase activity and may contribute to the recycling of ascorbic acid. Participates in the biotransformation of inorganic arsenic and reduces monomethylarsonic acid (MMA). This Homo sapiens (Human) protein is Glutathione S-transferase omega-2 (GSTO2).